Here is a 438-residue protein sequence, read N- to C-terminus: Probable trafficking protein particle complex subunit 13 homolog (438 aa).

Belongs to the TRAPPC13 family.

This is Probable trafficking protein particle complex subunit 13 homolog from Drosophila melanogaster (Fruit fly).